A 558-amino-acid polypeptide reads, in one-letter code: Urocanate hydratase (558 aa).

NAD(+)-binding positions include 54-55 (GG), Gln132, 178-180 (GMG), Glu198, 244-245 (NA), 265-269 (QTSAH), 275-276 (YL), and Tyr324. Cys412 is an active-site residue. Gly494 contacts NAD(+).

Belongs to the urocanase family. NAD(+) serves as cofactor.

It localises to the cytoplasm. It carries out the reaction 4-imidazolone-5-propanoate = trans-urocanate + H2O. Its pathway is amino-acid degradation; L-histidine degradation into L-glutamate; N-formimidoyl-L-glutamate from L-histidine: step 2/3. Its function is as follows. Catalyzes the conversion of urocanate to 4-imidazolone-5-propionate. This chain is Urocanate hydratase, found in Acinetobacter baumannii (strain ACICU).